The following is a 164-amino-acid chain: MQVILLQRIVNLGKLGETVDVKSGYGRNYLIPQGKALPATPANVEKFEARRAELEAIEAEELAAANKRAEALTDVNVIMRAKSGEDGKLFGSIGTRDIADALTKSGLEVDRAEVKLPEGTLRQVGEYNVDIQLHHDIFASILVTILSEDGDVEAAQQEAEEDAE.

This sequence belongs to the bacterial ribosomal protein bL9 family.

Its function is as follows. Binds to the 23S rRNA. The chain is Large ribosomal subunit protein bL9 from Psychrobacter sp. (strain PRwf-1).